The chain runs to 432 residues: Histidinol dehydrogenase (432 aa).

Substrate-binding residues include Ser240, Gln262, and His265. Zn(2+)-binding residues include Gln262 and His265. Catalysis depends on proton acceptor residues Glu330 and His331. Substrate is bound by residues His331, Asp364, Glu418, and His423. Asp364 is a Zn(2+) binding site. His423 provides a ligand contact to Zn(2+).

Belongs to the histidinol dehydrogenase family. Requires Zn(2+) as cofactor.

The catalysed reaction is L-histidinol + 2 NAD(+) + H2O = L-histidine + 2 NADH + 3 H(+). It functions in the pathway amino-acid biosynthesis; L-histidine biosynthesis; L-histidine from 5-phospho-alpha-D-ribose 1-diphosphate: step 9/9. In terms of biological role, catalyzes the sequential NAD-dependent oxidations of L-histidinol to L-histidinaldehyde and then to L-histidine. The chain is Histidinol dehydrogenase from Wolinella succinogenes (strain ATCC 29543 / DSM 1740 / CCUG 13145 / JCM 31913 / LMG 7466 / NCTC 11488 / FDC 602W) (Vibrio succinogenes).